The following is a 229-amino-acid chain: Peptidase E (229 aa).

Active-site charge relay system residues include Ser120, Asp135, and His157.

Belongs to the peptidase S51 family.

Its subcellular location is the cytoplasm. The enzyme catalyses Dipeptidase E catalyzes the hydrolysis of dipeptides Asp-|-Xaa. It does not act on peptides with N-terminal Glu, Asn or Gln, nor does it cleave isoaspartyl peptides.. Hydrolyzes dipeptides containing N-terminal aspartate residues. May play a role in allowing the cell to use peptide aspartate to spare carbon otherwise required for the synthesis of the aspartate family of amino acids. In Salmonella arizonae (strain ATCC BAA-731 / CDC346-86 / RSK2980), this protein is Peptidase E.